The chain runs to 859 residues: Cadherin-related family member 1 (859 aa).

An N-terminal signal peptide occupies residues 1-19 (MRRCRWAALALGLLRLCLA). At 20–700 (QANFAPHFFD…LIQTKDNPMK (681 aa)) the chain is on the extracellular side. 6 consecutive Cadherin domains span residues 36 to 135 (NGNM…APRF), 136 to 246 (IQEP…APVF), 247 to 353 (VGTP…PPTF), 359 to 472 (PQNR…VPKF), 473 to 576 (DSLY…PPQF), and 573 to 688 (PPQF…SPMA). 2 N-linked (GlcNAc...) asparagine glycosylation sites follow: asparagine 58 and asparagine 89. N-linked (GlcNAc...) asparagine glycosylation is present at asparagine 296. A helical transmembrane segment spans residues 701–721 (AVGVLAGTMATVVAITVLIST). At 722 to 859 (ATFWRNKKSN…KKSVHNKAYF (138 aa)) the chain is on the cytoplasmic side. The interval 770 to 838 (KEKPPNENCN…PKTMGSPVQS (69 aa)) is disordered. Over residues 775–791 (NENCNNNSPESSLLPRA) the composition is skewed to low complexity.

As to quaternary structure, interacts with PROM1. In terms of processing, undergoes proteolytic cleavage; produces a soluble 95 kDa N-terminal fragment and a 25 kDa cell-associated C-terminal fragment.

The protein resides in the cell membrane. In terms of biological role, potential calcium-dependent cell-adhesion protein. May be required for the structural integrity of the outer segment (OS) of photoreceptor cells. The chain is Cadherin-related family member 1 from Homo sapiens (Human).